The following is a 343-amino-acid chain: Armadillo repeat-containing protein 10 (343 aa).

Residues 5–27 traverse the membrane as a helical segment; sequence RGAGWVAAGLLLGAGACYCIYRL. Residues 43–83 form a disordered region; sequence SKSAGALEEGTSEGQLCGRSARPQTGGTWESQWSKTSQPED. Residue serine 45 is modified to Phosphoserine. Glutamate 50 carries the post-translational modification Phosphothreonine. Positions 64 to 82 are enriched in polar residues; it reads RPQTGGTWESQWSKTSQPE. A Phosphothreonine modification is found at threonine 85. Residues 138-180 form an ARM repeat; sequence GGIPIVANKINHSNQSIKEKALNALNNLSVNVENQIKIKIYIS.

As to quaternary structure, interacts with the DNA-binding domain of p53/TP53. Expressed in all tissues tested with higher expression in placenta, liver, kidney, heart and brain.

The protein localises to the endoplasmic reticulum membrane. It localises to the mitochondrion outer membrane. In terms of biological role, may play a role in cell survival and cell growth. May suppress the transcriptional activity of p53/TP53. The sequence is that of Armadillo repeat-containing protein 10 (ARMC10) from Homo sapiens (Human).